The chain runs to 380 residues: Anhydro-N-acetylmuramic acid kinase (380 aa).

Gly-9 to Asp-16 is an ATP binding site.

It belongs to the anhydro-N-acetylmuramic acid kinase family.

It carries out the reaction 1,6-anhydro-N-acetyl-beta-muramate + ATP + H2O = N-acetyl-D-muramate 6-phosphate + ADP + H(+). It participates in amino-sugar metabolism; 1,6-anhydro-N-acetylmuramate degradation. The protein operates within cell wall biogenesis; peptidoglycan recycling. In terms of biological role, catalyzes the specific phosphorylation of 1,6-anhydro-N-acetylmuramic acid (anhMurNAc) with the simultaneous cleavage of the 1,6-anhydro ring, generating MurNAc-6-P. Is required for the utilization of anhMurNAc either imported from the medium or derived from its own cell wall murein, and thus plays a role in cell wall recycling. This is Anhydro-N-acetylmuramic acid kinase from Synechococcus sp. (strain CC9902).